We begin with the raw amino-acid sequence, 444 residues long: Homogentisate 1,2-dioxygenase (444 aa).

The Proton acceptor role is filled by H298. 2 residues coordinate Fe cation: H341 and E347. 2 residues coordinate homogentisate: Y356 and H377. Position 377 (H377) interacts with Fe cation.

It belongs to the homogentisate dioxygenase family. In terms of assembly, hexamer; dimer of trimers. The cofactor is Fe cation.

It carries out the reaction homogentisate + O2 = 4-maleylacetoacetate + H(+). The protein operates within amino-acid degradation; L-phenylalanine degradation; acetoacetate and fumarate from L-phenylalanine: step 4/6. In terms of biological role, involved in the catabolism of homogentisate (2,5-dihydroxyphenylacetate or 2,5-OH-PhAc), a central intermediate in the degradation of phenylalanine and tyrosine. Catalyzes the oxidative ring cleavage of the aromatic ring of homogentisate to yield maleylacetoacetate. This chain is Homogentisate 1,2-dioxygenase, found in Burkholderia ambifaria (strain ATCC BAA-244 / DSM 16087 / CCUG 44356 / LMG 19182 / AMMD) (Burkholderia cepacia (strain AMMD)).